We begin with the raw amino-acid sequence, 154 residues long: Large ribosomal subunit protein bL19 (154 aa).

The tract at residues 1-33 (MAADPKDTTVTDENTETAATAEVETVASAPTSP) is disordered. A compositionally biased stretch (low complexity) spans 16–27 (ETAATAEVETVA).

The protein belongs to the bacterial ribosomal protein bL19 family.

This protein is located at the 30S-50S ribosomal subunit interface and may play a role in the structure and function of the aminoacyl-tRNA binding site. The chain is Large ribosomal subunit protein bL19 from Parasynechococcus marenigrum (strain WH8102).